The following is a 401-amino-acid chain: Methionine import ATP-binding protein MetN (401 aa).

The ABC transporter domain maps to 6-248 (ITFDHVVKEF…PQQPVTKRFI (243 aa)). 45–52 (GYSGAGKS) provides a ligand contact to ATP.

Belongs to the ABC transporter superfamily. Methionine importer (TC 3.A.1.24) family. As to quaternary structure, the complex is composed of two ATP-binding proteins (MetN), two transmembrane proteins (MetI) and a solute-binding protein (MetQ).

It localises to the cell membrane. It carries out the reaction L-methionine(out) + ATP + H2O = L-methionine(in) + ADP + phosphate + H(+). The catalysed reaction is D-methionine(out) + ATP + H2O = D-methionine(in) + ADP + phosphate + H(+). Functionally, part of the ABC transporter complex MetNIQ involved in methionine import. Responsible for energy coupling to the transport system. The protein is Methionine import ATP-binding protein MetN of Bifidobacterium longum (strain NCC 2705).